The primary structure comprises 146 residues: Transcription antitermination protein NusB (146 aa).

This sequence belongs to the NusB family.

Its function is as follows. Involved in transcription antitermination. Required for transcription of ribosomal RNA (rRNA) genes. Binds specifically to the boxA antiterminator sequence of the ribosomal RNA (rrn) operons. In Herpetosiphon aurantiacus (strain ATCC 23779 / DSM 785 / 114-95), this protein is Transcription antitermination protein NusB.